Here is a 223-residue protein sequence, read N- to C-terminus: Deoxyribose-phosphate aldolase 1 (223 aa).

Aspartate 91 acts as the Proton donor/acceptor in catalysis. Lysine 154 functions as the Schiff-base intermediate with acetaldehyde in the catalytic mechanism. Lysine 183 functions as the Proton donor/acceptor in the catalytic mechanism.

The protein belongs to the DeoC/FbaB aldolase family. DeoC type 1 subfamily.

The protein resides in the cytoplasm. The enzyme catalyses 2-deoxy-D-ribose 5-phosphate = D-glyceraldehyde 3-phosphate + acetaldehyde. The protein operates within carbohydrate degradation; 2-deoxy-D-ribose 1-phosphate degradation; D-glyceraldehyde 3-phosphate and acetaldehyde from 2-deoxy-alpha-D-ribose 1-phosphate: step 2/2. Catalyzes a reversible aldol reaction between acetaldehyde and D-glyceraldehyde 3-phosphate to generate 2-deoxy-D-ribose 5-phosphate. The chain is Deoxyribose-phosphate aldolase 1 from Bacillus licheniformis (strain ATCC 14580 / DSM 13 / JCM 2505 / CCUG 7422 / NBRC 12200 / NCIMB 9375 / NCTC 10341 / NRRL NRS-1264 / Gibson 46).